The primary structure comprises 1909 residues: DENN domain-containing protein 4C (1909 aa).

The 160-residue stretch at 40 to 199 folds into the MABP domain; sequence KAPITDIAII…SVFLCYKKSV (160 aa). Positions 191–364 constitute a uDENN domain; that stretch reads VFLCYKKSVP…NIPFPSPQRP (174 aa). The 137-residue stretch at 385–521 folds into the cDENN domain; sequence PLPLSGANFS…PCKNLLSTLK (137 aa). The 119-residue stretch at 523–641 folds into the dDENN domain; it reads LYPQLSSVHQ…CSFVSDKDTG (119 aa). Residues S703, S737, and S741 each carry the phosphoserine modification. The stretch at 821 to 855 is one PPR repeat; it reads VCYRVVMQLCGLWGHPVLAVRVLFEMKTARIKPNA. E953, S965, S968, and S973 each carry phosphoserine. T975 is modified (phosphothreonine). Phosphoserine is present on residues S989, S996, S1003, S1046, S1061, S1099, S1126, S1184, S1225, S1244, S1252, and S1278. Disordered stretches follow at residues 1243-1263 and 1277-1338; these read KSPL…NRES and SSLP…HGSL. Positions 1296 to 1316 are enriched in polar residues; it reads SSPAVSRSKTFTGRFKQQTPS. A phosphoserine mark is found at S1325, S1337, and S1346. Residues 1419–1474 form a disordered region; sequence SGLVPSELTQSNTSLGSSSSSGDVGKLHYPTGEVPFPRGMKGQDFEKSDHGSSQNT. Low complexity predominate over residues 1426–1440; it reads LTQSNTSLGSSSSSG. The span at 1459–1468 shows a compositional bias: basic and acidic residues; the sequence is KGQDFEKSDH. S1623, S1627, S1629, S1640, and S1799 each carry phosphoserine.

Post-translationally, phosphorylated in response to insulin.

It localises to the cytoplasmic vesicle membrane. The protein localises to the cell membrane. Its subcellular location is the cytoplasm. It is found in the cytosol. Functionally, guanine nucleotide exchange factor (GEF) activating RAB10. Promotes the exchange of GDP to GTP, converting inactive GDP-bound RAB10 into its active GTP-bound form. Thereby, stimulates SLC2A4/GLUT4 glucose transporter-enriched vesicles delivery to the plasma membrane in response to insulin. The sequence is that of DENN domain-containing protein 4C (DENND4C) from Homo sapiens (Human).